The sequence spans 409 residues: Carbamoyl phosphate synthase arginine-specific small chain (409 aa).

The 193-residue stretch at 197 to 389 folds into the Glutamine amidotransferase type-1 domain; it reads NVALIDCGVK…FDNMSQYRAL (193 aa). Residue Cys-277 is the Nucleophile of the active site. Catalysis depends on residues His-362 and Glu-364.

The protein belongs to the CarA family. In terms of assembly, heterodimer composed of 2 chains; the small (or glutamine) chain promotes the hydrolysis of glutamine to ammonia, which is used by the large (or ammonia) chain to synthesize carbamoyl phosphate.

It is found in the cytoplasm. The catalysed reaction is hydrogencarbonate + L-glutamine + 2 ATP + H2O = carbamoyl phosphate + L-glutamate + 2 ADP + phosphate + 2 H(+). It carries out the reaction L-glutamine + H2O = L-glutamate + NH4(+). It participates in amino-acid biosynthesis; L-arginine biosynthesis; carbamoyl phosphate from bicarbonate: step 1/1. In terms of biological role, small subunit of the arginine-specific carbamoyl phosphate synthase (CPSase). CPSase catalyzes the formation of carbamoyl phosphate from the ammonia moiety of glutamine, carbonate, and phosphate donated by ATP, constituting the first step of 2 biosynthetic pathways, one leading to arginine and/or urea and the other to pyrimidine nucleotides. The small subunit (glutamine amidotransferase) binds and cleaves glutamine to supply the large subunit with the substrate ammonia. This chain is Carbamoyl phosphate synthase arginine-specific small chain (CPA1), found in Kluyveromyces lactis (strain ATCC 8585 / CBS 2359 / DSM 70799 / NBRC 1267 / NRRL Y-1140 / WM37) (Yeast).